The chain runs to 378 residues: Ferredoxin--NADP reductase, root isozyme, chloroplastic (378 aa).

Low complexity predominate over residues 1–17 (MATAVASQVAVSAPAGS). Residues 1-27 (MATAVASQVAVSAPAGSDRGLRSSGIQ) are disordered. Residues 1 to 62 (MATAVASQVA…PRHANKVLCM (62 aa)) constitute a chloroplast transit peptide. In terms of domain architecture, FAD-binding FR-type spans 93–221 (KEPYTATIVS…TGPSGKIMLL (129 aa)). FAD is bound by residues 153 to 156 (RLYS), 174 to 176 (CVR), tyrosine 180, 195 to 197 (VCS), and threonine 237. Positions 156 and 176 each coordinate NADP(+). NADP(+)-binding positions include threonine 237, 269–270 (VA), 299–300 (SR), lysine 309, 337–338 (GL), and glutamate 376.

It belongs to the ferredoxin--NADP reductase type 1 family. It depends on FAD as a cofactor.

Its subcellular location is the plastid. It localises to the chloroplast. It catalyses the reaction 2 reduced [2Fe-2S]-[ferredoxin] + NADP(+) + H(+) = 2 oxidized [2Fe-2S]-[ferredoxin] + NADPH. It participates in energy metabolism; photosynthesis. May play a key role in regulating the relative amounts of cyclic and non-cyclic electron flow to meet the demands of the plant for ATP and reducing power. Is involved in nitrate assimilation. The chain is Ferredoxin--NADP reductase, root isozyme, chloroplastic from Oryza sativa subsp. japonica (Rice).